A 65-amino-acid polypeptide reads, in one-letter code: Large ribosomal subunit protein bL35 (65 aa).

Composition is skewed to basic residues over residues 1 to 18, 31 to 44, and 55 to 65; these read MPKM…KRTA, HRFH…RRQL, and VKRYKKMIPAK. The disordered stretch occupies residues 1-65; sequence MPKMKTKSAA…KRYKKMIPAK (65 aa).

The protein belongs to the bacterial ribosomal protein bL35 family.

The chain is Large ribosomal subunit protein bL35 from Limosilactobacillus fermentum (strain NBRC 3956 / LMG 18251) (Lactobacillus fermentum).